The primary structure comprises 573 residues: LysM domain-containing protein ARB_01155/01156 (573 aa).

Residues 1-18 (MIPRNLISGLFLLPFVVA) form the signal peptide. N46, N71, and N283 each carry an N-linked (GlcNAc...) asparagine glycan. Residues 373–419 (RYYEVVAGDQCNTIALHFGITVDAFLSLNTQIDERCSNLWIAYAYCV) form the LysM domain. The tract at residues 375–405 (YEVVAGDQCNTIALHFGITVDAFLSLNTQID) is lysM domain.

It localises to the secreted. Functionally, might have a role in sequestration of chitin oligosaccharides (breakdown products of fungal cell walls that are released during invasion and act as triggers of host immunity) to dampen host defense. In Arthroderma benhamiae (strain ATCC MYA-4681 / CBS 112371) (Trichophyton mentagrophytes), this protein is LysM domain-containing protein ARB_01155/01156.